Here is a 370-residue protein sequence, read N- to C-terminus: Aminomethyltransferase (370 aa).

It belongs to the GcvT family. The glycine cleavage system is composed of four proteins: P, T, L and H.

The enzyme catalyses N(6)-[(R)-S(8)-aminomethyldihydrolipoyl]-L-lysyl-[protein] + (6S)-5,6,7,8-tetrahydrofolate = N(6)-[(R)-dihydrolipoyl]-L-lysyl-[protein] + (6R)-5,10-methylene-5,6,7,8-tetrahydrofolate + NH4(+). The glycine cleavage system catalyzes the degradation of glycine. The protein is Aminomethyltransferase of Clostridium botulinum (strain 657 / Type Ba4).